The sequence spans 151 residues: D-aminoacyl-tRNA deacylase (151 aa).

Positions 137–138 (GP) match the Gly-cisPro motif, important for rejection of L-amino acids motif.

Belongs to the DTD family. Homodimer.

The protein localises to the cytoplasm. The enzyme catalyses glycyl-tRNA(Ala) + H2O = tRNA(Ala) + glycine + H(+). It carries out the reaction a D-aminoacyl-tRNA + H2O = a tRNA + a D-alpha-amino acid + H(+). An aminoacyl-tRNA editing enzyme that deacylates mischarged D-aminoacyl-tRNAs. Also deacylates mischarged glycyl-tRNA(Ala), protecting cells against glycine mischarging by AlaRS. Acts via tRNA-based rather than protein-based catalysis; rejects L-amino acids rather than detecting D-amino acids in the active site. By recycling D-aminoacyl-tRNA to D-amino acids and free tRNA molecules, this enzyme counteracts the toxicity associated with the formation of D-aminoacyl-tRNA entities in vivo and helps enforce protein L-homochirality. This Protochlamydia amoebophila (strain UWE25) protein is D-aminoacyl-tRNA deacylase.